Reading from the N-terminus, the 520-residue chain is Cholesterol side-chain cleavage enzyme, mitochondrial (520 aa).

The transit peptide at 1–39 (MLARGLPLRSALVKACPPLLNTGREGWGHHRVGTGEGAG) directs the protein to the mitochondrion. The segment at 27-48 (WGHHRVGTGEGAGISTRTPRPY) is disordered. C461 contacts heme.

Belongs to the cytochrome P450 family. Interacts with FDX1/adrenodoxin. Heme serves as cofactor.

It localises to the mitochondrion inner membrane. The enzyme catalyses 6 reduced [adrenodoxin] + cholesterol + 3 O2 + 6 H(+) = 4-methylpentanal + pregnenolone + 6 oxidized [adrenodoxin] + 4 H2O. It catalyses the reaction 2 reduced [adrenodoxin] + cholesterol + O2 + 2 H(+) = (22R)-hydroxycholesterol + 2 oxidized [adrenodoxin] + H2O. It carries out the reaction (22R)-hydroxycholesterol + 2 reduced [adrenodoxin] + O2 + 2 H(+) = (20R,22R)-20,22-dihydroxycholesterol + 2 oxidized [adrenodoxin] + H2O. The catalysed reaction is (20R,22R)-20,22-dihydroxycholesterol + 2 reduced [adrenodoxin] + O2 + 2 H(+) = 4-methylpentanal + pregnenolone + 2 oxidized [adrenodoxin] + 2 H2O. It participates in lipid metabolism; C21-steroid hormone metabolism. The protein operates within steroid metabolism; cholesterol metabolism. Its function is as follows. A cytochrome P450 monooxygenase that catalyzes the side-chain hydroxylation and cleavage of cholesterol to pregnenolone, the precursor of most steroid hormones. Catalyzes three sequential oxidation reactions of cholesterol, namely the hydroxylation at C22 followed with the hydroxylation at C20 to yield 20R,22R-hydroxycholesterol that is further cleaved between C20 and C22 to yield the C21-steroid pregnenolone and 4-methylpentanal. Mechanistically, uses molecular oxygen inserting one oxygen atom into a substrate and reducing the second into a water molecule. Two electrons are provided by NADPH via a two-protein mitochondrial transfer system comprising flavoprotein FDXR (adrenodoxin/ferredoxin reductase) and nonheme iron-sulfur protein FDX1 or FDX2 (adrenodoxin/ferredoxin). This is Cholesterol side-chain cleavage enzyme, mitochondrial from Capra hircus (Goat).